The following is an 872-amino-acid chain: Tegument protein UL47 homolog (872 aa).

Residues 1 to 206 are disordered; the sequence is MDQHHGVRGG…ENDTEVISDD (206 aa). The short motif at 13-33 is the Nuclear localization signal element; it reads IRRPRRSIETRSHPFRAAGNT. A compositionally biased stretch (polar residues) spans 31–41; it reads GNTQRTYSTPR. Composition is skewed to low complexity over residues 66–80 and 91–101; these read ESST…PSTS and DDAPAQPQAPR. Acidic residues-rich tracts occupy residues 110 to 134 and 177 to 204; these read PEED…EEDQ and AEEE…EVIS.

This sequence belongs to the alphaherpesvirinae HHV-1 UL47 family. Interacts with US3 kinase. Interacts with UL31 and UL34; these interactions seem important for efficient virion nuclear egress. Interacts with UL41/VHS. Post-translationally, phosphorylated by US3. This phosphorylation is required for proper nuclear localization. In terms of processing, O-glycosylated.

It localises to the virion tegument. The protein localises to the host nucleus. Its subcellular location is the host cytoplasm. Functionally, tegument protein that can bind to various RNA transcripts. Plays a role in the attenuation of selective viral and cellular mRNA degradation by modulating the activity of host shutoff RNase UL41/VHS. Also plays a role in the primary envelopment of virions in the perinuclear space, probably by interacting with two nuclear egress proteins UL31 and UL34. In Equus caballus (Horse), this protein is Tegument protein UL47 homolog (13).